Reading from the N-terminus, the 447-residue chain is Probable glycine dehydrogenase (decarboxylating) subunit 1 (447 aa).

The protein belongs to the GcvP family. N-terminal subunit subfamily. As to quaternary structure, the glycine cleavage system is composed of four proteins: P, T, L and H. In this organism, the P 'protein' is a heterodimer of two subunits.

The catalysed reaction is N(6)-[(R)-lipoyl]-L-lysyl-[glycine-cleavage complex H protein] + glycine + H(+) = N(6)-[(R)-S(8)-aminomethyldihydrolipoyl]-L-lysyl-[glycine-cleavage complex H protein] + CO2. Functionally, the glycine cleavage system catalyzes the degradation of glycine. The P protein binds the alpha-amino group of glycine through its pyridoxal phosphate cofactor; CO(2) is released and the remaining methylamine moiety is then transferred to the lipoamide cofactor of the H protein. This Macrococcus caseolyticus (strain JCSC5402) (Macrococcoides caseolyticum) protein is Probable glycine dehydrogenase (decarboxylating) subunit 1.